The primary structure comprises 161 residues: Protein ilm1 (161 aa).

The Cytoplasmic segment spans residues 1-6; it reads MLFSFR. Residues 7-27 form a helical membrane-spanning segment; it reads AIVLFYCCMLTFAGIGFLWNP. At 28–56 the chain is on the lumenal side; the sequence is KFVVESGLVALIGASMEVKPLIVTQDNLS. A helical membrane pass occupies residues 57-77; the sequence is TLALSGLVFLILGMIYTISLL. The Cytoplasmic portion of the chain corresponds to 78–81; that stretch reads QSNF. Residues 82–102 form a helical membrane-spanning segment; the sequence is LFFSGITPIRAIFDFILTGFI. Residues 103-112 are Lumenal-facing; it reads YLKKEHIASN. Residues 113-133 traverse the membrane as a helical segment; it reads SLTFTFAFCDLMWQFWMFAAM. At 134-161 the chain is on the cytoplasmic side; sequence SEERAKYLKNQKKAEELAARKAREVEES.

It belongs to the ILM1 family.

Its subcellular location is the endoplasmic reticulum. It localises to the membrane. The protein is Protein ilm1 of Schizosaccharomyces pombe (strain 972 / ATCC 24843) (Fission yeast).